The sequence spans 328 residues: Ketol-acid reductoisomerase (NADP(+)) (328 aa).

The KARI N-terminal Rossmann domain occupies 2-182; the sequence is AKIYTDREAS…GATRAGVIET (181 aa). NADP(+) contacts are provided by residues 25-28, Arg-48, Ser-53, and 83-86; these read YGIQ and DMEQ. The active site involves His-108. Gly-134 lines the NADP(+) pocket. Residues 183-328 enclose the KARI C-terminal knotted domain; it reads TFAEETETDL…EEMRKLLFGP (146 aa). Residues Asp-191, Glu-195, Glu-227, and Glu-231 each coordinate Mg(2+). Position 252 (Ser-252) interacts with substrate.

It belongs to the ketol-acid reductoisomerase family. It depends on Mg(2+) as a cofactor.

It catalyses the reaction (2R)-2,3-dihydroxy-3-methylbutanoate + NADP(+) = (2S)-2-acetolactate + NADPH + H(+). The catalysed reaction is (2R,3R)-2,3-dihydroxy-3-methylpentanoate + NADP(+) = (S)-2-ethyl-2-hydroxy-3-oxobutanoate + NADPH + H(+). It functions in the pathway amino-acid biosynthesis; L-isoleucine biosynthesis; L-isoleucine from 2-oxobutanoate: step 2/4. Its pathway is amino-acid biosynthesis; L-valine biosynthesis; L-valine from pyruvate: step 2/4. Involved in the biosynthesis of branched-chain amino acids (BCAA). Catalyzes an alkyl-migration followed by a ketol-acid reduction of (S)-2-acetolactate (S2AL) to yield (R)-2,3-dihydroxy-isovalerate. In the isomerase reaction, S2AL is rearranged via a Mg-dependent methyl migration to produce 3-hydroxy-3-methyl-2-ketobutyrate (HMKB). In the reductase reaction, this 2-ketoacid undergoes a metal-dependent reduction by NADPH to yield (R)-2,3-dihydroxy-isovalerate. The polypeptide is Ketol-acid reductoisomerase (NADP(+)) (Pyrobaculum aerophilum (strain ATCC 51768 / DSM 7523 / JCM 9630 / CIP 104966 / NBRC 100827 / IM2)).